A 664-amino-acid chain; its full sequence is MKRRNADCSKLRRPLKRNRITEGIYGSTFLYLKFLVVWALVLLADFVLEFRFEYLWPFWLFIRSVYDSFRYQGLAFSVFFVCVAFTSNIICLLFIPIQWLFFAASTYVWVQYVWHTERGVCLPTVSLWILFVYIEAAIRFKDLKNFHVDLCRPFAAHCIGYPVVTLGFGFKSYVSYKMRLRKQKEVQKENEFYMQLLQQALPPEQQMLQKQEKEAEEAAKGLPDMDSSILIHHNGGIPANKKLSTALPEIEYREKGKEKDKDAKKHNLGINNNNILQPVDSKIQEIEYMENHINSKRLNNDLVGSTENLLKEDSCTASSKNYKNASGVVNSSPRSHSATNGSIPSSSSKNEKKQRCTSKGPSAHKDLMENCIPNNQLSKPDALVRLEQDIKKLKADLQASRQVEQELRSQISSLSSTERGIRSEMGQLRQENELLQNKLHNAVQMKQKDKQNISQLEKRLKAEQEARGFVEKQLMEEKKRKKLEEATAARAVAFAAASRGECTETLRSRIRELEAEGKKLTMDLKVKEEQIRELELKVQELRKYKENEKDTEVLMSALSAMQDKTQHLENSLSAETRIKLDLFSALGDAKRQLEIAQGQILQKDQEIKDLKQKIAEVMAVMPSITYSAATSPLSPVSPHYSSKFVETSPSGLDPNASVYQPLKK.

The next 4 helical transmembrane spans lie at 28–48 (TFLY…DFVL), 75–95 (AFSV…LLFI), 120–140 (VCLP…AIRF), and 154–174 (FAAH…KSYV). The span at 252 to 265 (YREKGKEKDKDAKK) shows a compositional bias: basic and acidic residues. The disordered stretch occupies residues 252 to 274 (YREKGKEKDKDAKKHNLGINNNN). Ser305 carries the phosphoserine modification. Residues 320-348 (KNYKNASGVVNSSPRSHSATNGSIPSSSS) show a composition bias toward polar residues. The interval 320-375 (KNYKNASGVVNSSPRSHSATNGSIPSSSSKNEKKQRCTSKGPSAHKDLMENCIPNN) is disordered. A glycan (N-linked (GlcNAc...) asparagine) is linked at Asn324. Phosphoserine is present on Ser332. Asn340 and Asn452 each carry an N-linked (GlcNAc...) asparagine glycan. Positions 630–664 (TSPLSPVSPHYSSKFVETSPSGLDPNASVYQPLKK) are disordered. 2 positions are modified to phosphoserine: Ser631 and Ser634. A glycan (N-linked (GlcNAc...) asparagine) is linked at Asn655.

The protein belongs to the macoilin family.

It localises to the rough endoplasmic reticulum membrane. It is found in the nucleus membrane. Its function is as follows. Plays a role in the regulation of neuronal activity. The sequence is that of Macoilin from Rattus norvegicus (Rat).